The sequence spans 197 residues: ATP-dependent Clp protease proteolytic subunit 2 (197 aa).

Ser96 serves as the catalytic Nucleophile. The active site involves His121.

The protein belongs to the peptidase S14 family. As to quaternary structure, fourteen ClpP subunits assemble into 2 heptameric rings which stack back to back to give a disk-like structure with a central cavity, resembling the structure of eukaryotic proteasomes.

The protein resides in the cytoplasm. It carries out the reaction Hydrolysis of proteins to small peptides in the presence of ATP and magnesium. alpha-casein is the usual test substrate. In the absence of ATP, only oligopeptides shorter than five residues are hydrolyzed (such as succinyl-Leu-Tyr-|-NHMec, and Leu-Tyr-Leu-|-Tyr-Trp, in which cleavage of the -Tyr-|-Leu- and -Tyr-|-Trp bonds also occurs).. Functionally, cleaves peptides in various proteins in a process that requires ATP hydrolysis. Has a chymotrypsin-like activity. Plays a major role in the degradation of misfolded proteins. This is ATP-dependent Clp protease proteolytic subunit 2 from Parasynechococcus marenigrum (strain WH8102).